The primary structure comprises 269 residues: Small ribosomal subunit protein eS1 (269 aa).

A disordered region spans residues M1–K20.

The protein belongs to the eukaryotic ribosomal protein eS1 family. As to quaternary structure, component of the small ribosomal subunit. Mature ribosomes consist of a small (40S) and a large (60S) subunit. The 40S subunit contains about 33 different proteins and 1 molecule of RNA (18S). The 60S subunit contains about 49 different proteins and 3 molecules of RNA (28S, 5.8S and 5S).

The protein localises to the cytoplasm. Its function is as follows. Has an essential role in oogenesis. This chain is Small ribosomal subunit protein eS1, found in Anopheles gambiae (African malaria mosquito).